A 354-amino-acid chain; its full sequence is Mating-type protein MAT-1 (354 aa).

Residues 60–117 constitute a DNA-binding region (alpha box); the sequence is KAKKALNAFVGFRCYYIAIPAFKQWPMKKLSNLISLLWDRDPNKSLWSLMAKAWSNIR.

It belongs to the MATALPHA1 family.

Its subcellular location is the nucleus. Mating type proteins are sequence specific DNA-binding proteins that act as master switches in fungal differentiation by controlling gene expression in a cell type-specific fashion. Transcriptional activator that induces the transcription of alpha-specific genes. This is Mating-type protein MAT-1 (MAT1) from Cochliobolus cymbopogonis (Curvularia cymbopogonis).